We begin with the raw amino-acid sequence, 276 residues long: Glyoxal reductase (276 aa).

The Proton donor role is filled by Tyr-54. His-112 is a binding site for substrate. Residue 190–242 (SPLMQGQLLDNEVLTQIAEKHNKSVAQVILRWDLQHGVVTIPKSIKEHRIIEN) participates in NADP(+) binding.

Belongs to the aldo/keto reductase family.

It carries out the reaction (S)-lactaldehyde + NADP(+) = methylglyoxal + NADPH + H(+). In terms of biological role, reduces glyoxal and methylglyoxal (2-oxopropanal). Is not involved in the vitamin B6 biosynthesis. The polypeptide is Glyoxal reductase (yvgN) (Bacillus subtilis (strain 168)).